The sequence spans 221 residues: PKHD-type hydroxylase A9601_13531 (221 aa).

The Fe2OG dioxygenase domain occupies 80 to 174 (LIHGIMFTKS…RIVCVGWIES (95 aa)). Fe cation-binding residues include His98, Asp100, and His155. Arg165 is a 2-oxoglutarate binding site.

The cofactor is Fe(2+). L-ascorbate serves as cofactor.

The sequence is that of PKHD-type hydroxylase A9601_13531 from Prochlorococcus marinus (strain AS9601).